Here is a 97-residue protein sequence, read N- to C-terminus: Essential MCU regulator, mitochondrial (97 aa).

A mitochondrion-targeting transit peptide spans 1 to 37; it reads MAARMGVLSVAGFRAAARAGGLLARPKQSTAVVPCRT. The Mitochondrial matrix segment spans residues 38-55; that stretch reads VIASSAGAILPKPEKVSF. The chain crosses the membrane as a helical span at residues 56-75; sequence GLLRVFTVVIPFLYIGTLIS. Residues 76–97 lie on the Mitochondrial intermembrane side of the membrane; it reads KNFAAVLEEHDIFVPEDDDDDD.

This sequence belongs to the SMDT1/EMRE family. As to quaternary structure, component of the uniplex complex.

The protein resides in the mitochondrion inner membrane. Its function is as follows. Essential regulatory subunit of the mitochondrial calcium uniporter complex (uniplex), a complex that mediates calcium uptake into mitochondria. Required to bridge the calcium-sensing proteins micu1 with the calcium-conducting subunit mcu. Acts by mediating activation of mcu and retention of micu1 to the mcu pore, in order to ensure tight regulation of the uniplex complex and appropriate responses to intracellular calcium signaling. The protein is Essential MCU regulator, mitochondrial of Xenopus laevis (African clawed frog).